A 380-amino-acid polypeptide reads, in one-letter code: 1-deoxy-D-xylulose 5-phosphate reductoisomerase (380 aa).

Threonine 10, glycine 11, serine 12, isoleucine 13, glycine 36, arginine 37, asparagine 38, and asparagine 120 together coordinate NADPH. Position 121 (lysine 121) interacts with 1-deoxy-D-xylulose 5-phosphate. Residue glutamate 122 coordinates NADPH. Aspartate 146 is a binding site for Mn(2+). Residues serine 147, glutamate 148, serine 172, and histidine 195 each coordinate 1-deoxy-D-xylulose 5-phosphate. Glutamate 148 contacts Mn(2+). Glycine 201 is an NADPH binding site. The 1-deoxy-D-xylulose 5-phosphate site is built by serine 208, asparagine 213, lysine 214, and glutamate 217. Glutamate 217 is a binding site for Mn(2+).

It belongs to the DXR family. It depends on Mg(2+) as a cofactor. Mn(2+) is required as a cofactor.

It catalyses the reaction 2-C-methyl-D-erythritol 4-phosphate + NADP(+) = 1-deoxy-D-xylulose 5-phosphate + NADPH + H(+). It functions in the pathway isoprenoid biosynthesis; isopentenyl diphosphate biosynthesis via DXP pathway; isopentenyl diphosphate from 1-deoxy-D-xylulose 5-phosphate: step 1/6. Its function is as follows. Catalyzes the NADPH-dependent rearrangement and reduction of 1-deoxy-D-xylulose-5-phosphate (DXP) to 2-C-methyl-D-erythritol 4-phosphate (MEP). This is 1-deoxy-D-xylulose 5-phosphate reductoisomerase from Listeria welshimeri serovar 6b (strain ATCC 35897 / DSM 20650 / CCUG 15529 / CIP 8149 / NCTC 11857 / SLCC 5334 / V8).